We begin with the raw amino-acid sequence, 953 residues long: Nucleotide-binding oligomerization domain-containing protein 1 (953 aa).

A CARD domain is found at 15–105 (ESHPHIQLLK…AYVDLRPWLL (91 aa)). One can recognise an NACHT domain in the interval 196-531 (ETIFILGDAG…AFFTAFFLVL (336 aa)). 202 to 209 (GDAGVGKS) provides a ligand contact to ATP. S-palmitoyl cysteine attachment occurs at residues C558 and C567. LRR repeat units follow at residues 632 to 656 (LKSLPRVQVESFNQVQAMPTFIWML), 702 to 725 (FPKRLALDLDNNNLNDYGVRELQP), 727 to 750 (FSRLTVLRLSVNQITDGGVKVLSE), 755 to 778 (YKIVTYLGLYNNQITDVGARYVTK), 783 to 806 (CKGLTHLKLGKNKITSEGGKYLAL), 839 to 862 (HPSLTTLSLASNGISTEGGKSLAR), 867 to 891 (NTSLEILWLTQNELNDEVAESLAEM), 895 to 918 (NQTLKHLWLIQNQITAKGTAQLAD), and 923 to 946 (NTGITEICLNGNLIKPEEAKVYED). C952 carries S-palmitoyl cysteine lipidation.

It belongs to the NOD1-NOD2 family. Homooligomer: homooligomerizes following ligand-binding, promoting RIPK2 recruitment. Interacts (via CARD domain) with RIPK2 (via CARD domain). Following RIPK2 recruitment, RIPK2 homooligomerizes via its CARD domain and forms long filaments named RIPosomes. Interacts with ARHGEF2. Interacts (via CARD domain) with ubiquitin; inhibiting interaction with RIPK2. Interacts with NLRP10 and recruits it to the cell membrane following invasive bacterial infection. Interacts with IFIH1; this interaction promotes transcription of antiviral genes and inhibition of viral replication. Interacts with IRGM; promoting NOD1 degradation. Interacts with ATG16L1. In terms of processing, palmitoylated. Palmitoylation is required for proper recruitment to the bacterial entry site and hence for proper signaling upon cognate peptidoglycan detection. Ubiquitinated. 'Lys-48'-linked polyubiquitination by RNF34 promotes proteasomal degradation and thereby negatively regulates NOD1 for instance in NF-kappa-B activation. Post-translationally, degraded via selective autophagy following interaction with IRGM. IRGM promotes NOD1-RIPK2 RIPosome recruitment to autophagosome membranes, promoting their SQSTM1/p62-dependent autophagic degradation. In terms of tissue distribution, highly expressed in adult heart, skeletal muscle, pancreas, spleen and ovary. Also detected in placenta, lung, liver, kidney, thymus, testis, small intestine and colon.

It localises to the cell membrane. The protein localises to the apical cell membrane. Its subcellular location is the basolateral cell membrane. It is found in the cytoplasm. Its function is as follows. Pattern recognition receptor (PRR) that detects bacterial peptidoglycan fragments and other danger signals and thus participates in both innate and adaptive immune responses. Specifically recognizes and binds gamma-D-glutamyl-meso-diaminopimelic acid (iE-DAP), a dipeptide present in peptidoglycan of Gram-negative bacteria. Preferentially binds iE-DAP in tripeptide-containing muropeptides (MurNAc-TriDAP or TriDAP). Ligand binding triggers oligomerization that facilitates the binding and subsequent activation of the proximal adapter receptor-interacting RIPK2. Following recruitment, RIPK2 undergoes 'Met-1'- (linear) and 'Lys-63'-linked polyubiquitination by E3 ubiquitin-protein ligases XIAP, BIRC2, BIRC3 and the LUBAC complex, becoming a scaffolding protein for downstream effectors, triggering activation of the NF-kappa-B and MAP kinases signaling. This in turn leads to the transcriptional activation of hundreds of genes involved in immune response. Also acts as a regulator of antiviral response elicited by dsRNA and the expression of RLR pathway members by targeting IFIH1 and TRAF3 to modulate the formation of IFIH1-MAVS and TRAF3-MAVS complexes leading to increased transcription of type I IFNs. Also acts as a regulator of autophagy via its interaction with ATG16L1, possibly by recruiting ATG16L1 at the site of bacterial entry. Besides recognizing pathogens, also involved in the endoplasmic reticulum stress response: acts by sensing and binding to the cytosolic metabolite sphingosine-1-phosphate generated in response to endoplasmic reticulum stress, initiating an inflammation process that leads to activation of the NF-kappa-B and MAP kinases signaling. In addition, plays a role in insulin trafficking in beta cells in a cell-autonomous manner. Mechanistically, upon recognizing cognate ligands, NOD1 and RIPK2 localize to insulin vesicles where they recruit RAB1A to direct insulin trafficking through the cytoplasm. In contrast to isoform 1, does not efficiently recognize and bind gamma-D-glutamyl-meso-diaminopimelic acid (iE-DAP) ligand. The sequence is that of Nucleotide-binding oligomerization domain-containing protein 1 from Homo sapiens (Human).